Consider the following 106-residue polypeptide: Nucleoid-associated protein bll8115 (106 aa).

The protein belongs to the YbaB/EbfC family. In terms of assembly, homodimer.

It is found in the cytoplasm. The protein localises to the nucleoid. Its function is as follows. Binds to DNA and alters its conformation. May be involved in regulation of gene expression, nucleoid organization and DNA protection. The polypeptide is Nucleoid-associated protein bll8115 (Bradyrhizobium diazoefficiens (strain JCM 10833 / BCRC 13528 / IAM 13628 / NBRC 14792 / USDA 110)).